The sequence spans 70 residues: U2-agatoxin-Ao1j (70 aa).

An N-terminal signal peptide occupies residues 1 to 20; sequence MRAIISLLLISAMVFSMIAA. A propeptide spanning residues 21 to 34 is cleaved from the precursor; that stretch reads VPEEEGLQLSEDER. Disulfide bonds link cysteine 37–cysteine 53, cysteine 44–cysteine 58, and cysteine 52–cysteine 68. Leucine 69 carries the post-translational modification Leucine amide.

It belongs to the neurotoxin 01 (U2-agtx) family. As to expression, expressed by the venom gland.

Its subcellular location is the secreted. Insect active toxin causing rapid but reversible paralysis in crickets. No activity shown in mammals. Does not show effect on mammalian voltage-gated calcium channels. The chain is U2-agatoxin-Ao1j from Agelena orientalis (Funnel-web spider).